The primary structure comprises 346 residues: Dihydroorotate dehydrogenase (quinone) (346 aa).

Residues 62-66 (AGMDK) and Thr86 contribute to the FMN site. Lys66 is a substrate binding site. A substrate-binding site is contributed by 111–115 (NRMGF). Asn142 and Asn175 together coordinate FMN. Substrate is bound at residue Asn175. Ser178 serves as the catalytic Nucleophile. A substrate-binding site is contributed by Asn180. FMN contacts are provided by Lys211 and Val239. 240-241 (NT) contributes to the substrate binding site. Residues Gly261, Gly289, and 310 to 311 (YT) contribute to the FMN site.

It belongs to the dihydroorotate dehydrogenase family. Type 2 subfamily. In terms of assembly, monomer. Requires FMN as cofactor.

The protein localises to the cell membrane. It carries out the reaction (S)-dihydroorotate + a quinone = orotate + a quinol. Its pathway is pyrimidine metabolism; UMP biosynthesis via de novo pathway; orotate from (S)-dihydroorotate (quinone route): step 1/1. Functionally, catalyzes the conversion of dihydroorotate to orotate with quinone as electron acceptor. This chain is Dihydroorotate dehydrogenase (quinone), found in Thermus thermophilus (strain ATCC BAA-163 / DSM 7039 / HB27).